We begin with the raw amino-acid sequence, 910 residues long: Protein kinase 3 (910 aa).

Positions 119–129 (SPSGGGGGGSG) are enriched in gly residues. Disordered regions lie at residues 119 to 239 (SPSG…PNLI), 270 to 295 (FNNNNNNNNSNLTTTTTTTSTFKTPT), and 391 to 454 (NKDD…NDKK). 6 stretches are compositionally biased toward low complexity: residues 130–160 (VSSNGSNSTATSPNTSPIRLYVSDPSNQPTS), 169–196 (LSESVGVHRSSPMLSSSRMISQLSQSTS), 209–220 (GLSGSSTSSSSA), 227–239 (NNNANNSTPPNLI), 270–290 (FNNNNNNNNSNLTTTTTTTST), and 422–450 (INQPSSLPSNNNSNNNNITKSNSTTTSQT). Residues 498 to 763 (FELLKVLGVG…FEEISSHPFF (266 aa)) form the Protein kinase domain. Residues 504–512 (LGVGSFGRV) and Lys-527 contribute to the ATP site. The active-site Proton acceptor is Asp-621. Thr-664 is subject to Phosphothreonine; by autocatalysis. Residues 764–854 (ELIPWRMLES…NKEEEDGIMG (91 aa)) form the AGC-kinase C-terminal domain. 2 disordered regions span residues 786–812 (EISLPNSNSNSNNNSQQPTNNNLTLSC) and 859–910 (IGSI…KGSV). Low complexity-rich tracts occupy residues 788–809 (SLPNSNSNSNNNSQQPTNNNLT) and 859–886 (IGSISSNNSISSSPTSSSPINNNNSGGS).

The protein belongs to the protein kinase superfamily. AGC Ser/Thr protein kinase family.

It catalyses the reaction L-seryl-[protein] + ATP = O-phospho-L-seryl-[protein] + ADP + H(+). It carries out the reaction L-threonyl-[protein] + ATP = O-phospho-L-threonyl-[protein] + ADP + H(+). This Dictyostelium discoideum (Social amoeba) protein is Protein kinase 3 (pkgC).